We begin with the raw amino-acid sequence, 53 residues long: UPF0391 membrane protein PA5482 (53 aa).

The next 2 helical transmembrane spans lie at Trp-4–Ala-24 and Gly-29–Gly-49.

Belongs to the UPF0391 family.

Its subcellular location is the cell membrane. This chain is UPF0391 membrane protein PA5482, found in Pseudomonas aeruginosa (strain ATCC 15692 / DSM 22644 / CIP 104116 / JCM 14847 / LMG 12228 / 1C / PRS 101 / PAO1).